Reading from the N-terminus, the 163-residue chain is GPI-anchored protein LLG2 (163 aa).

The signal sequence occupies residues 1–23 (MEISPYCLLSLLPIFLLSGFSLS). The N-linked (GlcNAc...) asparagine glycan is linked to Asn52. Residue Ser135 is the site of GPI-anchor amidated serine attachment. The propeptide at 136–163 (DSIPRASTTASLAVLSTFLVLCLLFLSS) is removed in mature form.

As to expression, expressed in pollen, pollen tubes, sporophytic pistil tissues, in the early stages of female gametophyte development, and in unfertilized, mature ovules.

It localises to the cell membrane. The chain is GPI-anchored protein LLG2 from Arabidopsis thaliana (Mouse-ear cress).